Reading from the N-terminus, the 642-residue chain is MSTVTVTLPDGTPLEVERGSTVEDVAYEIGPGLGDDTVAGVVDGELVDKHAPLTADVELEIVTESSDEYLDVLRHSAAHVFAQALQRLYSDAKLTIGPWTDNGFYYDITGVDIDEDDLEAIEAEAEEIIEEDLDIERELVDRDDAFERYEDNQFKQDILETEAADDEEVSFYTQGEFEDLCQGPHVESTGEIGGFALLEISAAFWRGEEENETLTRVYGTAFPTEDALDEFLEQRRKAEERDHRKIGQEMDLFSIDETTGPGLPLYEPNGKKILNELSDYVAGLNRDAGYDEVETPHVFRTELWKKSGHYENYVDDMFLLDVNDEEYGLKPMNCPGHATIFEQNSWSYRDLPVRYFEDGKVYRKEQRGELSGLSRTWAFTIDDGHLFVRPDQIEEEVLATVDIILDTLDTFNLDYTVQFATRPEKSVGGDEIWEKAESQLESVLEEQDIDYVVEEGDGAFYGPKIDFAFEDALGRHWDGPTVQLDFNMPERFDLSYTGEDNEEHRPVMIHRALYGSYERFFMVLTEHYNGKFPPWLAPEQIRLLPVSDDNITYCEEIQDELDDFRVTIEDRSWTVGKKIQQAHDDRVPYMCVIGDNEEEAGTISVRDRKEREEKDIDIAEFRDHLETEVEQQRTAVTFLAGR.

The region spanning 1 to 63 (MSTVTVTLPD…TADVELEIVT (63 aa)) is the TGS domain. Residues 242–533 (DHRKIGQEMD…LTEHYNGKFP (292 aa)) are catalytic. 3 residues coordinate Zn(2+): C334, H385, and H510.

Belongs to the class-II aminoacyl-tRNA synthetase family. As to quaternary structure, homodimer. Zn(2+) serves as cofactor.

Its subcellular location is the cytoplasm. It catalyses the reaction tRNA(Thr) + L-threonine + ATP = L-threonyl-tRNA(Thr) + AMP + diphosphate + H(+). Its function is as follows. Catalyzes the attachment of threonine to tRNA(Thr) in a two-step reaction: L-threonine is first activated by ATP to form Thr-AMP and then transferred to the acceptor end of tRNA(Thr). The polypeptide is Threonine--tRNA ligase (Haloarcula marismortui (strain ATCC 43049 / DSM 3752 / JCM 8966 / VKM B-1809) (Halobacterium marismortui)).